The following is a 469-amino-acid chain: tRNA (cytosine(72)-C(5))-methyltransferase NSUN6 (469 aa).

Residues 111–203 form the PUA domain; it reads QCEAIVGAQC…MGIRMTEPVY (93 aa). S-adenosyl-L-methionine is bound by residues 242–248, Asp266, Asp293, and Asp323; that span reads CAAPGGK. Catalysis depends on Cys373, which acts as the Nucleophile. An N6-acetyllysine modification is found at Lys419.

Belongs to the class I-like SAM-binding methyltransferase superfamily. RsmB/NOP family.

It is found in the cytoplasm. It carries out the reaction cytidine(72) in tRNA(Thr) + S-adenosyl-L-methionine = 5-methylcytidine(72) in tRNA(Thr) + S-adenosyl-L-homocysteine + H(+). It catalyses the reaction cytidine(72) in tRNA(Cys) + S-adenosyl-L-methionine = 5-methylcytidine(72) in tRNA(Cys) + S-adenosyl-L-homocysteine + H(+). S-adenosyl-L-methionine-dependent methyltransferase that specifically methylates the C5 position of cytosine 72 in tRNA(Thr)(TGT) and tRNA(Cys)(GCA). In vitro also methylates tRNA(Thr)(AGT). Methylation requires, in the acceptor stem region, the presence of the 3'-CCA terminus, the target site C72, the discriminator base U73, and the second and third base pairs (2:71 and 3:70) in the tRNA substrates. This Homo sapiens (Human) protein is tRNA (cytosine(72)-C(5))-methyltransferase NSUN6.